The primary structure comprises 500 residues: L-arabinose isomerase (500 aa).

Mn(2+) is bound by residues Glu306, Glu333, His349, and His448.

The protein belongs to the arabinose isomerase family. Requires Mn(2+) as cofactor.

It catalyses the reaction beta-L-arabinopyranose = L-ribulose. Its pathway is carbohydrate degradation; L-arabinose degradation via L-ribulose; D-xylulose 5-phosphate from L-arabinose (bacterial route): step 1/3. Functionally, catalyzes the conversion of L-arabinose to L-ribulose. The protein is L-arabinose isomerase of Shewanella sp. (strain MR-4).